A 392-amino-acid chain; its full sequence is ER-bound oxygenase mpaB (392 aa).

At 1 to 21 (MSLPLPPALSELARALPYSRT) the chain is on the lumenal side. The helical transmembrane segment at 22-41 (QWLPIFVGFLIGYPILIRAL) threads the bilayer. Over 42–392 (RYKRHGEMKK…WSKYHATTND (351 aa)) the chain is Cytoplasmic. The tract at residues 352-376 (DLGQKKGPQGDPGNDEGIKDLKDGE) is disordered. Residues 367-376 (EGIKDLKDGE) show a composition bias toward basic and acidic residues.

The protein belongs to the mpaB oxygenase family.

Its subcellular location is the endoplasmic reticulum membrane. It carries out the reaction 4-farnesyl-3,5-dihydroxy-6-methylphthalide + AH2 + 2 O2 = (4E,8E)-10-(4,6-dihydroxy-7-methyl-3-oxo-1,3-dihydro-2-benzofuran-5-yl)-4,8-dimethyldeca-4,8-dienoate + acetone + A + H2O + H(+). It functions in the pathway secondary metabolite biosynthesis; terpenoid biosynthesis. Its function is as follows. ER-bound oxygenase; part of the gene cluster that mediates the biosynthesis of mycophenolic acid (MPA), the first isolated antibiotic natural product in the world obtained from a culture of Penicillium brevicompactum in 1893. MpaB catalyzes the oxidative cleavage the C19-C20 double bond in farnesyl-DHMP (FDHMP) to yield FDHMP-3C via a mycophenolic aldehyde intermediate. The first step of the pathway is the synthesis of 5-methylorsellinic acid (5MOA) by the cytosolic polyketide synthase mpaC. 5MOA is then converted to the phthalide compound 5,7-dihydroxy-4,6-dimethylphthalide (DHMP) by the endoplasmic reticulum-bound cytochrome P450 monooxygenase mpaDE. MpaDE first catalyzes hydroxylation of 5-MOA to 4,6-dihydroxy-2-(hydroxymethyl)-3-methylbenzoic acid (DHMB). MpaDE then acts as a lactone synthase that catalyzes the ring closure to convert DHMB into DHMP. The next step is the prenylation of DHMP by the Golgi apparatus-associated prenyltransferase mpaA to yield farnesyl-DHMP (FDHMP). The ER-bound oxygenase mpaB then mediates the oxidative cleavage the C19-C20 double bond in FDHMP to yield FDHMP-3C via a mycophenolic aldehyde intermediate. The O-methyltransferase mpaG catalyzes the methylation of FDHMP-3C to yield MFDHMP-3C. After the cytosolic methylation of FDHMP-3C, MFDHMP-3C enters into peroxisomes probably via free diffusion due to its low molecular weight. Upon a peroxisomal CoA ligation reaction, catalyzed by a beta-oxidation component enzyme acyl-CoA ligase ACL891, MFDHMP-3C-CoA would then be restricted to peroxisomes for the following beta-oxidation pathway steps. The peroxisomal beta-oxidation machinery than converts MFDHMP-3C-CoA into MPA_CoA, via a beta-oxidation chain-shortening process. Finally mpaH acts as a peroxisomal acyl-CoA hydrolase with high substrate specificity toward MPA-CoA to release the final product MPA. The polypeptide is ER-bound oxygenase mpaB (Penicillium brevicompactum).